Here is a 193-residue protein sequence, read N- to C-terminus: L-2,4-diaminobutyric acid acetyltransferase (193 aa).

A disordered region spans residues 1 to 22 (MSLQTLSTPTAEPVEEPRPVEA). In terms of domain architecture, N-acetyltransferase spans 33-185 (ALLRAPQLGD…EHAPEDLYRI (153 aa)).

The protein belongs to the acetyltransferase family. EctA subfamily.

The catalysed reaction is L-2,4-diaminobutanoate + acetyl-CoA = (2S)-4-acetamido-2-aminobutanoate + CoA + H(+). The protein operates within amine and polyamine biosynthesis; ectoine biosynthesis; L-ectoine from L-aspartate 4-semialdehyde: step 2/3. Functionally, catalyzes the acetylation of L-2,4-diaminobutyrate (DABA) to gamma-N-acetyl-alpha,gamma-diaminobutyric acid (ADABA) with acetyl coenzyme A. The chain is L-2,4-diaminobutyric acid acetyltransferase (ectA) from Nocardia farcinica (strain IFM 10152).